A 360-amino-acid chain; its full sequence is Protein Wnt-2 (360 aa).

The N-terminal stretch at 1-25 (MNAPLCGIWLWLPLLLTWLTPEVSS) is a signal peptide. Intrachain disulfides connect Cys-76–Cys-87, Cys-127–Cys-135, Cys-137–Cys-157, Cys-206–Cys-220, Cys-208–Cys-215, Cys-278–Cys-309, Cys-294–Cys-304, Cys-308–Cys-348, Cys-324–Cys-339, Cys-326–Cys-336, and Cys-331–Cys-332. A lipid anchor (O-palmitoleoyl serine; by PORCN) is attached at Ser-212. Residue Asn-295 is glycosylated (N-linked (GlcNAc...) asparagine).

The protein belongs to the Wnt family. Palmitoleoylation is required for efficient binding to frizzled receptors. Depalmitoleoylation leads to Wnt signaling pathway inhibition.

It localises to the secreted. The protein localises to the extracellular space. Its subcellular location is the extracellular matrix. Ligand for members of the frizzled family of seven transmembrane receptors. Functions in the canonical Wnt signaling pathway that results in activation of transcription factors of the TCF/LEF family. Functions as a upstream regulator of FGF10 expression. Plays an important role in embryonic lung development. May contribute to embryonic brain development by regulating the proliferation of dopaminergic precursors and neurons. This Otolemur garnettii (Small-eared galago) protein is Protein Wnt-2 (WNT2).